A 140-amino-acid chain; its full sequence is UPF0134 protein MPN_094 (140 aa).

The protein belongs to the UPF0134 family.

This is UPF0134 protein MPN_094 from Mycoplasma pneumoniae (strain ATCC 29342 / M129 / Subtype 1) (Mycoplasmoides pneumoniae).